The sequence spans 292 residues: MLRRQMSFNGKSDMGILYLVPTPIGNLEDMTFRAIDTLKSVDAIAAEDTRQTKKLCHVYEIETPLVSYHEHNKESSGHKIIEWLKSGKNIALVSDAGLPTISDPGAEIVKDFTDIGGYVVPLPGANAALTALIASGIVPQPFFFYGFLNRQKKEKKKELEALKKRQETIIFYEAPHRLKETLSAMAEILGDREIAVTRELTKKYEEFIRGTISEVIGWANEDQIRGEFCLVVEGSNNEEVDEEEQWWETLTAKEHVEHYISKGATSKEAIKKAAVDRNVPKREVYDAYHIKQ.

The protein belongs to the methyltransferase superfamily. RsmI family.

It localises to the cytoplasm. It catalyses the reaction cytidine(1402) in 16S rRNA + S-adenosyl-L-methionine = 2'-O-methylcytidine(1402) in 16S rRNA + S-adenosyl-L-homocysteine + H(+). In terms of biological role, catalyzes the 2'-O-methylation of the ribose of cytidine 1402 (C1402) in 16S rRNA. The polypeptide is Ribosomal RNA small subunit methyltransferase I (Bacillus subtilis (strain 168)).